Reading from the N-terminus, the 129-residue chain is GM1b/asialo-GM1 oligosaccharide-binding R-type lectin (129 aa).

A carbohydrate-binding positions include 21 to 23 (FYN), 26 to 28 (RKD), phenylalanine 32, and 37 to 40 (YDDQ).

In terms of assembly, homodimer. Highest expression in the outer part of the mantle rim. Highly expressed in gills, with a much lower expression in the digestive gland and posterior adductor muscle. Scarcely detectable in foot.

Hemagglutination activity requires divalent cations such as Ca(2+). Hemagglutination activity is weakly inhibited by monosaccharides such as D-Gal (25 mM), D-GalNAc (25 mM) and D-Fuc (25 mM) and by disaccharides such as melibiose (25 mM) and lactose (25 mM). Hemagglutination activity is inhibited by bovine submaxillary mucin, but not by porcine stomach mucin or fetuin. Galbeta1-3GalNAcbeta1-4Galbeta1-4Glc oligosaccharide-binding lectin. Binds strongly to the oligosaccharides of ganglioside GM1b and to a lesser extent its precursor asialo-GM1. Binds weakly to asialo-GM2 oligosaccharide and to the glycan moiety of globo-series stage-specific embryonal antigen 4 (SSEA-4) hexaose. Binds galactose, N-acetylgalactose and lactose. Does not bind GM1. Does not bind to Gal-beta1,3-GalNAc (Thomsen-Friedenreich antigen), the oligosaccharide of GM1a ganglioside or SSEA-4 tetraose. Does not bind to N-glycans, O-glycans or glycosaminoglycans of glycoproteins. Does not bind Lewis glycans, derivatives of lactose or N-acetyllactosamine or blood group (ABH-type) oligosaccharides. Does not bind glucose. Has hemagglutination activity towards rabbit erythrocytes. Displays cytotoxic effects against various cultured cell lines including human breast (MCF-7), cervical (HeLa) and colon cancer (Caco2) cell lines, as well as dog kidney (MDCK) cell line that express asialo-GM1 oligosaccharide at their cell surface. Shows dose- and time-dependent activation of MKK3/6, ERK1/2 and p38 MAPK, as well as caspase-3/9 in HeLa cervical cancer cells. No cytotoxic effect on BT474 human breast cancer cell line. May be involved in recognition of glycans found on parasitic or symbiotic microorganisms. This is GM1b/asialo-GM1 oligosaccharide-binding R-type lectin from Mytilisepta virgata (Purplish bifurcate mussel).